Here is a 209-residue protein sequence, read N- to C-terminus: Claudin-4 (209 aa).

Over 1 to 9 (MASMGLQVT) the chain is Cytoplasmic. The interval 1–103 (MASMGLQVTG…GVLLSVVGGK (103 aa)) is interaction with EPHA2. The chain crosses the membrane as a helical span at residues 10-30 (GIALAVLGWLAVMLCCALPMW). The Extracellular portion of the chain corresponds to 31 to 81 (RVTAFIGSNIVTSQTIWEGLWMNCVVQSTGQMQCKVYDSLLALPQDLQAAR). Cys-54 and Cys-64 are joined by a disulfide. The chain crosses the membrane as a helical span at residues 82–102 (ALVIISIIVAALGVLLSVVGG). At 103-117 (KCTNCLEDESAKAKT) the chain is on the cytoplasmic side. A helical transmembrane segment spans residues 118–138 (MIVAGVVFLLAGLLVIVPVSW). At 139-160 (TAHNIIQDFYNPLVASGQKREM) the chain is on the extracellular side. Residues 161 to 181 (GASLYVGWAASGLLLLGGGLL) form a helical membrane-spanning segment. Over 182-209 (CCNCPPRTDKPYSAKYSAARSAAASNYV) the chain is Cytoplasmic. Tyr-208 carries the phosphotyrosine; by EPHA2 modification. The interval 208 to 209 (YV) is interactions with TJP1, TJP2 and TJP3.

It belongs to the claudin family. As to quaternary structure, interacts with EPHA2; phosphorylates CLDN4 and may regulate tight junctions. Directly interacts with TJP1/ZO-1, TJP2/ZO-2 and TJP3/ZO-3. Interacts with CLDN1. Interacts with CLDN8. Phosphorylated. Phosphorylation by EPHA2 is stimulated by EFNA1 and alters interaction with TJP1.

It localises to the cell junction. Its subcellular location is the tight junction. It is found in the cell membrane. Its function is as follows. Channel-forming tight junction protein that mediates paracellular chloride transport in the kidney. Plays a critical role in the paracellular reabsorption of filtered chloride in the kidney collecting ducts. Claudins play a major role in tight junction-specific obliteration of the intercellular space, through calcium-independent cell-adhesion activity. This is Claudin-4 (CLDN4) from Chlorocebus aethiops (Green monkey).